The primary structure comprises 208 residues: uncharacterized protein (208 aa).

4 consecutive 4Fe-4S ferredoxin-type domains span residues 59 to 88, 114 to 145, 147 to 176, and 174 to 203; these read GVLVTQRARCTGCHRCEISCTNFNDGSVGT, GDLNYTADTCRQCKEPQCMNVCPIGAITWQQK, GCITVDHKRCIGCSACTTACPWMMATVNTE, and NTESKKSSKCVLCGECANACPTGALKIIEW. [4Fe-4S] cluster-binding residues include cysteine 68, cysteine 71, cysteine 74, cysteine 78, cysteine 123, cysteine 126, cysteine 131, cysteine 135, cysteine 156, cysteine 159, cysteine 162, cysteine 166, cysteine 183, cysteine 186, cysteine 189, and cysteine 193.

This is an uncharacterized protein from Escherichia coli O157:H7.